A 248-amino-acid chain; its full sequence is AA9 family lytic polysaccharide monooxygenase G (248 aa).

The N-terminal stretch at 1-21 is a signal peptide; the sequence is MLPNAAGLLVAGVVSLSGVAA. His-22 contacts Cu(2+). A glycan (N-linked (GlcNAc...) asparagine) is linked at Asn-58. A disulfide bond links Cys-77 and Cys-195. His-107 provides a ligand contact to Cu(2+). Gln-190 is a binding site for O2. Tyr-192 lines the Cu(2+) pocket. Asn-203 carries N-linked (GlcNAc...) asparagine glycosylation.

Belongs to the polysaccharide monooxygenase AA9 family. It depends on Cu(2+) as a cofactor.

The protein resides in the secreted. The enzyme catalyses [(1-&gt;4)-beta-D-glucosyl]n+m + reduced acceptor + O2 = 4-dehydro-beta-D-glucosyl-[(1-&gt;4)-beta-D-glucosyl]n-1 + [(1-&gt;4)-beta-D-glucosyl]m + acceptor + H2O.. Functionally, lytic polysaccharide monooxygenase (LPMO) that depolymerizes crystalline and amorphous polysaccharides via the oxidation of scissile alpha- or beta-(1-4)-glycosidic bonds, yielding C1 or C4 oxidation products. Catalysis by LPMOs requires the reduction of the active-site copper from Cu(II) to Cu(I) by a reducing agent and H(2)O(2) or O(2) as a cosubstrate. The polypeptide is AA9 family lytic polysaccharide monooxygenase G (Malbranchea cinnamomea (Thermophilic fungus)).